We begin with the raw amino-acid sequence, 653 residues long: Chaperone protein DnaK (653 aa).

Threonine 200 carries the post-translational modification Phosphothreonine; by autocatalysis. Residues glutamine 612–aspartate 653 are disordered. Low complexity predominate over residues alanine 627–alanine 639.

The protein belongs to the heat shock protein 70 family.

Functionally, acts as a chaperone. The sequence is that of Chaperone protein DnaK from Paraburkholderia phymatum (strain DSM 17167 / CIP 108236 / LMG 21445 / STM815) (Burkholderia phymatum).